Consider the following 118-residue polypeptide: MQVVVLKLDVHCEKTKQKAMSTVCCLSGVNSVEVKDGKLTVTGEIDAYMIVKKLKKICHTEFISVGPVKEPEKKKPDDPKKPETKPPDVIYHYVPPCPPYYHNFNGCYNEDPNACVTS.

The HMA domain occupies 1–65 (MQVVVLKLDV…KICHTEFISV (65 aa)). The disordered stretch occupies residues 68–87 (VKEPEKKKPDDPKKPETKPP). Positions 69–86 (KEPEKKKPDDPKKPETKP) are enriched in basic and acidic residues. Cys-115 is modified (cysteine methyl ester). Cys-115 is lipidated: S-farnesyl cysteine. A propeptide spans 116-118 (VTS) (removed in mature form).

Belongs to the HIPP family.

Functionally, probable heavy-metal-binding protein. This is Heavy metal-associated isoprenylated plant protein 12 from Arabidopsis thaliana (Mouse-ear cress).